The following is a 575-amino-acid chain: Probable cytochrome P450 514A1 (575 aa).

A helical transmembrane segment spans residues 4 to 24 (IFTIILTITILVLSLILKDLL). Residue Cys-448 coordinates heme.

The protein belongs to the cytochrome P450 family. Heme serves as cofactor.

It is found in the membrane. The sequence is that of Probable cytochrome P450 514A1 (cyp514A1) from Dictyostelium discoideum (Social amoeba).